Here is an 819-residue protein sequence, read N- to C-terminus: USP6 N-terminal-like protein (819 aa).

Residue Met1 is modified to N-acetylmethionine. Positions 100–292 (GIPLQLRGEV…RIWDIYIFEG (193 aa)) constitute a Rab-GAP TBC domain. Basic and acidic residues predominate over residues 355–367 (DLPEPGKEDEYPK). Disordered regions lie at residues 355–498 (DLPE…ERTT) and 513–678 (LPVA…SRPT). Residues Ser389, Ser394, and Ser398 each carry the phosphoserine modification. Composition is skewed to basic and acidic residues over residues 399-414 (SRRE…EHSP) and 432-449 (KSVD…ESQR). Positions 464–476 (HAAANQNSNAISN) are enriched in low complexity. 2 stretches are compositionally biased toward basic and acidic residues: residues 477 to 489 (VRKE…RKPS) and 533 to 542 (KALDGGEGKR). Residues Ser544 and Ser547 each carry the phosphoserine modification. Basic and acidic residues predominate over residues 556 to 571 (ESEHGASAEEGPERTH). Phosphoserine is present on residues Ser574, Ser631, Ser644, Ser648, Ser665, Ser669, and Ser704. Over residues 642–655 (FVSTQISPRPQINP) the composition is skewed to polar residues. Tyr717 is modified (phosphotyrosine). Positions 788–802 (ASPPGYPYAGPSPSA) are enriched in low complexity. Positions 788-807 (ASPPGYPYAGPSPSAHHYRN) are disordered.

Interacts with EPS8.

The protein resides in the golgi apparatus. Its subcellular location is the cytoplasmic vesicle. Acts as a GTPase-activating protein for RAB5A and RAB43. Involved in receptor trafficking. In complex with EPS8 inhibits internalization of EGFR. Involved in retrograde transport from the endocytic pathway to the Golgi apparatus. Involved in the transport of Shiga toxin from early and recycling endosomes to the trans-Golgi network. Required for structural integrity of the Golgi complex. The protein is USP6 N-terminal-like protein (Usp6nl) of Mus musculus (Mouse).